Consider the following 553-residue polypeptide: Zinc finger protein 324A (553 aa).

The 72-residue stretch at 1 to 72 (MAFEDVAVYF…SGTDTTLSRT (72 aa)) folds into the KRAB domain. Residues 130 to 135 (PSRERK) carry the Nuclear localization signal motif. The segment at 186 to 221 (GRQPRTPERQKPCAQEVPGRTFGSAQDLEAAGGRGH) is disordered. 9 C2H2-type zinc fingers span residues 257–279 (FECR…LRTH), 285–307 (YECA…QRIH), 313–335 (YACP…QRIH), 341–363 (FRCS…RKIH), 369–391 (YACA…ERTH), 397–419 (FVCA…QRVH), 425–447 (FACP…QLLH), 453–475 (FRCV…RRIH), and 481–503 (FVCT…QRIH). The segment at 502–553 (IHTGEKTVRRSRASLHPQARSVAGASSEGAPAKETEPTPASGPAAVSQPAEV) is disordered.

It belongs to the krueppel C2H2-type zinc-finger protein family. In terms of tissue distribution, expressed at high levels in the spleen, thymus, and PBMC, at low levels in the prostate, ovary, small intestine, colon (mucosal lining), placenta, lung, and pancreas, and very weakly expressed in the liver and kidney.

The protein resides in the nucleus. May be involved in transcriptional regulation. May be involved in regulation of cell proliferation. In Homo sapiens (Human), this protein is Zinc finger protein 324A (ZNF324).